The chain runs to 122 residues: Large ribosomal subunit protein uL14 (122 aa).

Belongs to the universal ribosomal protein uL14 family. Part of the 50S ribosomal subunit. Forms a cluster with proteins L3 and L19. In the 70S ribosome, L14 and L19 interact and together make contacts with the 16S rRNA in bridges B5 and B8.

Its function is as follows. Binds to 23S rRNA. Forms part of two intersubunit bridges in the 70S ribosome. This Microcystis aeruginosa (strain NIES-843 / IAM M-2473) protein is Large ribosomal subunit protein uL14.